The sequence spans 134 residues: Large ribosomal subunit protein bL17 (134 aa).

This sequence belongs to the bacterial ribosomal protein bL17 family. As to quaternary structure, part of the 50S ribosomal subunit. Contacts protein L32.

This chain is Large ribosomal subunit protein bL17, found in Anaplasma marginale (strain Florida).